A 177-amino-acid polypeptide reads, in one-letter code: Adenine phosphoribosyltransferase (177 aa).

The protein belongs to the purine/pyrimidine phosphoribosyltransferase family. Homodimer.

The protein resides in the cytoplasm. It carries out the reaction AMP + diphosphate = 5-phospho-alpha-D-ribose 1-diphosphate + adenine. Its pathway is purine metabolism; AMP biosynthesis via salvage pathway; AMP from adenine: step 1/1. Catalyzes a salvage reaction resulting in the formation of AMP, that is energically less costly than de novo synthesis. This is Adenine phosphoribosyltransferase from Leptospira interrogans serogroup Icterohaemorrhagiae serovar copenhageni (strain Fiocruz L1-130).